The sequence spans 307 residues: tRNA dimethylallyltransferase (307 aa).

Glycine 7–threonine 14 serves as a coordination point for ATP. Position 9–14 (threonine 9–threonine 14) interacts with substrate. An interaction with substrate tRNA region spans residues aspartate 32–glutamine 35.

The protein belongs to the IPP transferase family. As to quaternary structure, monomer. It depends on Mg(2+) as a cofactor.

The enzyme catalyses adenosine(37) in tRNA + dimethylallyl diphosphate = N(6)-dimethylallyladenosine(37) in tRNA + diphosphate. Functionally, catalyzes the transfer of a dimethylallyl group onto the adenine at position 37 in tRNAs that read codons beginning with uridine, leading to the formation of N6-(dimethylallyl)adenosine (i(6)A). This is tRNA dimethylallyltransferase from Elusimicrobium minutum (strain Pei191).